Here is a 301-residue protein sequence, read N- to C-terminus: Very-long-chain aldehyde decarbonylase GL1-10 (301 aa).

3 helical membrane-spanning segments follow: residues 36–56 (VLFWHNILFLFVVFTLAPLPV), 94–114 (FFLVIGPLQLVSYPTVKMVGI), and 187–207 (SFVGPALAPGHMITFWLWIVL). The region spanning 131–265 (LVYFLVEDYL…FTYCDYLYGT (135 aa)) is the Fatty acid hydroxylase domain.

It belongs to the sterol desaturase family. In terms of assembly, homodimer. As to expression, expressed ubiquitously.

The protein resides in the endoplasmic reticulum membrane. The catalysed reaction is a long-chain fatty aldehyde + 2 NADPH + O2 + H(+) = a long-chain alkane + formate + 2 NADP(+) + H2O. Its function is as follows. Aldehyde decarbonylase involved in the conversion of aldehydes to alkanes. Core component of a very-long-chain alkane synthesis complex. The sequence is that of Very-long-chain aldehyde decarbonylase GL1-10 from Oryza sativa subsp. japonica (Rice).